Here is a 101-residue protein sequence, read N- to C-terminus: NADH-quinone oxidoreductase subunit K (101 aa).

3 consecutive transmembrane segments (helical) span residues 4-24, 30-50, and 65-85; these read LSHY…GIFI, IVIL…LVAF, and FVLT…VVFF.

This sequence belongs to the complex I subunit 4L family. In terms of assembly, NDH-1 is composed of 14 different subunits. Subunits NuoA, H, J, K, L, M, N constitute the membrane sector of the complex.

It is found in the cell inner membrane. The enzyme catalyses a quinone + NADH + 5 H(+)(in) = a quinol + NAD(+) + 4 H(+)(out). NDH-1 shuttles electrons from NADH, via FMN and iron-sulfur (Fe-S) centers, to quinones in the respiratory chain. The immediate electron acceptor for the enzyme in this species is believed to be ubiquinone. Couples the redox reaction to proton translocation (for every two electrons transferred, four hydrogen ions are translocated across the cytoplasmic membrane), and thus conserves the redox energy in a proton gradient. The sequence is that of NADH-quinone oxidoreductase subunit K from Methylobacterium sp. (strain 4-46).